Consider the following 183-residue polypeptide: Acyl-homoserine-lactone synthase (183 aa).

Belongs to the autoinducer synthase family.

The enzyme catalyses a fatty acyl-[ACP] + S-adenosyl-L-methionine = an N-acyl-L-homoserine lactone + S-methyl-5'-thioadenosine + holo-[ACP] + H(+). Functionally, involved in the synthesis of the acyl-homoserine lactone (AHL) signal N-(3-hydroxydodecanoyl)-L-HSL (3-hydroxy-C(12)-HSL or OH-dDHL). Probably part of a quorum-sensing system with AnoR. This Acinetobacter nosocomialis protein is Acyl-homoserine-lactone synthase.